A 182-amino-acid chain; its full sequence is Large ribosomal subunit protein uL10 (182 aa).

This sequence belongs to the universal ribosomal protein uL10 family. In terms of assembly, part of the ribosomal stalk of the 50S ribosomal subunit. The N-terminus interacts with L11 and the large rRNA to form the base of the stalk. The C-terminus forms an elongated spine to which L12 dimers bind in a sequential fashion forming a multimeric L10(L12)X complex.

In terms of biological role, forms part of the ribosomal stalk, playing a central role in the interaction of the ribosome with GTP-bound translation factors. The protein is Large ribosomal subunit protein uL10 of Janthinobacterium sp. (strain Marseille) (Minibacterium massiliensis).